The following is a 484-amino-acid chain: Glutamyl-tRNA(Gln) amidotransferase subunit A (484 aa).

Active-site charge relay system residues include lysine 76 and serine 151. Serine 175 serves as the catalytic Acyl-ester intermediate.

This sequence belongs to the amidase family. GatA subfamily. As to quaternary structure, heterotrimer of A, B and C subunits.

It catalyses the reaction L-glutamyl-tRNA(Gln) + L-glutamine + ATP + H2O = L-glutaminyl-tRNA(Gln) + L-glutamate + ADP + phosphate + H(+). Allows the formation of correctly charged Gln-tRNA(Gln) through the transamidation of misacylated Glu-tRNA(Gln) in organisms which lack glutaminyl-tRNA synthetase. The reaction takes place in the presence of glutamine and ATP through an activated gamma-phospho-Glu-tRNA(Gln). This is Glutamyl-tRNA(Gln) amidotransferase subunit A from Alkalilimnicola ehrlichii (strain ATCC BAA-1101 / DSM 17681 / MLHE-1).